Here is a 106-residue protein sequence, read N- to C-terminus: Putative double-stranded DNA mimic protein VCM66_1163 (106 aa).

It belongs to the putative dsDNA mimic protein family.

Functionally, may act as a double-stranded DNA (dsDNA) mimic. Probably regulates the activity of a dsDNA-binding protein. The protein is Putative double-stranded DNA mimic protein VCM66_1163 of Vibrio cholerae serotype O1 (strain M66-2).